The primary structure comprises 170 residues: Putative pre-16S rRNA nuclease (170 aa).

The segment at 1–25 (MVPAQHRPPDRPGDPAHDPGRGRRL) is disordered. Positions 7–21 (RPPDRPGDPAHDPGR) are enriched in basic and acidic residues.

This sequence belongs to the YqgF nuclease family.

Its subcellular location is the cytoplasm. In terms of biological role, could be a nuclease involved in processing of the 5'-end of pre-16S rRNA. In Mycobacterium tuberculosis (strain ATCC 25177 / H37Ra), this protein is Putative pre-16S rRNA nuclease.